The following is a 125-amino-acid chain: Major intrinsically disordered NOTCH2-binding receptor 1-like (125 aa).

Asparagine 37 is a glycosylation site (N-linked (GlcNAc...) asparagine). Residues 100–120 (FAFITLFVCAVVIIITVPIVV) form a helical membrane-spanning segment.

Belongs to the MINAR family. In terms of assembly, interacts with NOTCH2. Highly expressed in the auditory hair cells.

The protein localises to the lysosome membrane. It is found in the endoplasmic reticulum membrane. Functionally, binds cholesterol and may regulate the distribution and homeostasis of cholesterol in hair cells. May play a role in angiogenesis. The chain is Major intrinsically disordered NOTCH2-binding receptor 1-like from Danio rerio (Zebrafish).